Reading from the N-terminus, the 367-residue chain is Anhydro-N-acetylmuramic acid kinase (367 aa).

Residue 11 to 18 (GTSLDGVD) coordinates ATP.

This sequence belongs to the anhydro-N-acetylmuramic acid kinase family.

It carries out the reaction 1,6-anhydro-N-acetyl-beta-muramate + ATP + H2O = N-acetyl-D-muramate 6-phosphate + ADP + H(+). Its pathway is amino-sugar metabolism; 1,6-anhydro-N-acetylmuramate degradation. The protein operates within cell wall biogenesis; peptidoglycan recycling. Catalyzes the specific phosphorylation of 1,6-anhydro-N-acetylmuramic acid (anhMurNAc) with the simultaneous cleavage of the 1,6-anhydro ring, generating MurNAc-6-P. Is required for the utilization of anhMurNAc either imported from the medium or derived from its own cell wall murein, and thus plays a role in cell wall recycling. The protein is Anhydro-N-acetylmuramic acid kinase of Bradyrhizobium diazoefficiens (strain JCM 10833 / BCRC 13528 / IAM 13628 / NBRC 14792 / USDA 110).